Consider the following 473-residue polypeptide: N-lysine methyltransferase SETD6 (473 aa).

Positions 1 to 23 (MAAPAKRARVSGGSPLVAPCPSP) are disordered. Serine 14 and serine 22 each carry phosphoserine. The SET domain maps to 62–286 (PKVTVSRQGT…EGHEIFNTYG (225 aa)). Lysine 63 bears the N6-methylated lysine; by autocatalysis mark. An S-adenosyl-L-methionine-binding site is contributed by 73-75 (AGY). Substrate is bound at residue tryptophan 122. At lysine 179 the chain carries N6-methylated lysine; by autocatalysis. Residue tyrosine 223 participates in S-adenosyl-L-methionine binding. Substrate is bound by residues serine 224 and glutamine 226. S-adenosyl-L-methionine is bound by residues 251 to 252 (NH) and tyrosine 297. Lysine 372 is modified (N6-methylated lysine; by autocatalysis).

It belongs to the class V-like SAM-binding methyltransferase superfamily. Histone-lysine methyltransferase family. SETD6 subfamily. As to quaternary structure, monomer, homodimer and homotrimer; these structures are stabilized in the presence of S-adenosyl-L-methionine (SAM). In terms of processing, automethylated.

It localises to the nucleus. It catalyses the reaction L-lysyl-[protein] + S-adenosyl-L-methionine = N(6)-methyl-L-lysyl-[protein] + S-adenosyl-L-homocysteine + H(+). The enzyme catalyses L-lysyl(8)-[histone H2AZ] + S-adenosyl-L-methionine = N(6)-methyl-L-lysyl(8)-[histone H2AZ] + S-adenosyl-L-homocysteine + H(+). Protein-lysine N-methyltransferase. Monomethylates 'Lys-310' of the RELA subunit of NF-kappa-B complex, leading to down-regulation of NF-kappa-B transcription factor activity. Monomethylates 'Lys-8' of H2AZ (H2AZK8me1). Required for the maintenance of embryonic stem cell self-renewal. Methylates PAK4. This Mus musculus (Mouse) protein is N-lysine methyltransferase SETD6 (Setd6).